A 737-amino-acid chain; its full sequence is Transcription activator MSS11 (737 aa).

Positions 1 to 23 (MDNTTNINTNERSSNTDFSSAPN) are disordered. A LisH domain is found at 51–83 (SKQLLYAHIYNYLIKNNYWNSAAKFLSEADLPL). 4 disordered regions span residues 191 to 220 (TQNS…TNRN), 268 to 347 (LQSP…PTNQ), 413 to 439 (GNQN…NANG), and 572 to 660 (KTNT…TKES). Positions 207–220 (DGSNFNLNDPTNRN) are enriched in polar residues. Low complexity predominate over residues 269–314 (QSPAQPQQSSQQQIQQPQRQPQHQQQQQQQQQQQQQQQQQQQQQQQ). Polar residues-rich tracts occupy residues 330–347 (SENS…PTNQ), 421–439 (TRNN…NANG), and 572–585 (KTNT…STSV). The segment covering 590-643 (NNNNNNNNNNNNNNNSNNSNNNNNNNNSNNTPTVSQPSSKRTSSSSTTPNITTT) has biased composition (low complexity). A compositionally biased stretch (basic residues) spans 646–655 (PKRKQRVGKT).

It belongs to the MSS11 family. In terms of assembly, interacts with FLO8, STE12 and TEC1.

The protein localises to the cytoplasm. The protein resides in the nucleus. Functionally, transcription factor that regulates pseudohyphal differentiation, invasive growth, floculation, adhesion and starch metabolism in response to nutrient availability. This is Transcription activator MSS11 (MSS11) from Saccharomyces cerevisiae (strain YJM789) (Baker's yeast).